The primary structure comprises 392 residues: Pectate lyase 3 (392 aa).

Positions M1–S25 are cleaved as a signal peptide. N37 carries an N-linked (GlcNAc...) asparagine glycan. Residues C54 and C71 are joined by a disulfide bond. Residues D194, D218, and D222 each contribute to the Ca(2+) site. The active site involves R270.

The protein belongs to the polysaccharide lyase 1 family. Amb a subfamily. As to quaternary structure, monomer. It depends on Ca(2+) as a cofactor. In terms of processing, the N-terminus is blocked. In terms of tissue distribution, pollen and flowers.

It catalyses the reaction Eliminative cleavage of (1-&gt;4)-alpha-D-galacturonan to give oligosaccharides with 4-deoxy-alpha-D-galact-4-enuronosyl groups at their non-reducing ends.. Its pathway is glycan metabolism; pectin degradation; 2-dehydro-3-deoxy-D-gluconate from pectin: step 2/5. In terms of biological role, has pectate lyase activity. This chain is Pectate lyase 3, found in Ambrosia artemisiifolia (Common ragweed).